The following is a 52-amino-acid chain: Large ribosomal subunit protein bL33 (52 aa).

It belongs to the bacterial ribosomal protein bL33 family.

This is Large ribosomal subunit protein bL33 from Anaeromyxobacter dehalogenans (strain 2CP-C).